A 119-amino-acid polypeptide reads, in one-letter code: MVKLAFPRELRLLTPAHFTFVFQQPQRAGTPQITILGRLNSLGHPRIGLTVAKKNVRRAHERNRIKRLTRESFRLRQHELPAMDFVVVAKKGVADLDNRALSEALEKLWRRHCRLARGS.

It belongs to the RnpA family. Consists of a catalytic RNA component (M1 or rnpB) and a protein subunit.

The enzyme catalyses Endonucleolytic cleavage of RNA, removing 5'-extranucleotides from tRNA precursor.. Its function is as follows. RNaseP catalyzes the removal of the 5'-leader sequence from pre-tRNA to produce the mature 5'-terminus. It can also cleave other RNA substrates such as 4.5S RNA. The protein component plays an auxiliary but essential role in vivo by binding to the 5'-leader sequence and broadening the substrate specificity of the ribozyme. The sequence is that of Ribonuclease P protein component from Salmonella schwarzengrund (strain CVM19633).